An 89-amino-acid polypeptide reads, in one-letter code: Small ribosomal subunit protein uS15 (89 aa).

Belongs to the universal ribosomal protein uS15 family. In terms of assembly, part of the 30S ribosomal subunit. Forms a bridge to the 50S subunit in the 70S ribosome, contacting the 23S rRNA.

Functionally, one of the primary rRNA binding proteins, it binds directly to 16S rRNA where it helps nucleate assembly of the platform of the 30S subunit by binding and bridging several RNA helices of the 16S rRNA. Forms an intersubunit bridge (bridge B4) with the 23S rRNA of the 50S subunit in the ribosome. This is Small ribosomal subunit protein uS15 from Chlamydia pneumoniae (Chlamydophila pneumoniae).